The primary structure comprises 284 residues: D-tagatose-1,6-bisphosphate aldolase subunit GatY (284 aa).

Residue aspartate 82 is the Proton donor of the active site. Histidine 83 and histidine 180 together coordinate Zn(2+). Glycine 181 contributes to the dihydroxyacetone phosphate binding site. Histidine 208 lines the Zn(2+) pocket. Residues 209 to 211 and 230 to 233 each bind dihydroxyacetone phosphate; these read GAS and NVAT.

This sequence belongs to the class II fructose-bisphosphate aldolase family. TagBP aldolase GatY subfamily. As to quaternary structure, forms a complex with GatZ. Requires Zn(2+) as cofactor.

It carries out the reaction D-tagatofuranose 1,6-bisphosphate = D-glyceraldehyde 3-phosphate + dihydroxyacetone phosphate. Its pathway is carbohydrate metabolism; D-tagatose 6-phosphate degradation; D-glyceraldehyde 3-phosphate and glycerone phosphate from D-tagatose 6-phosphate: step 2/2. Catalytic subunit of the tagatose-1,6-bisphosphate aldolase GatYZ, which catalyzes the reversible aldol condensation of dihydroxyacetone phosphate (DHAP or glycerone-phosphate) with glyceraldehyde 3-phosphate (G3P) to produce tagatose 1,6-bisphosphate (TBP). Requires GatZ subunit for full activity and stability. Is involved in the catabolism of galactitol. In Escherichia coli O6:H1 (strain CFT073 / ATCC 700928 / UPEC), this protein is D-tagatose-1,6-bisphosphate aldolase subunit GatY.